Here is an 822-residue protein sequence, read N- to C-terminus: uncharacterized protein (822 aa).

The segment at 1–230 is disordered; that stretch reads MARGKRSTQR…NAAPLNKTDA (230 aa). At Ser27 the chain carries Phosphoserine. Residues 34 to 44 are compositionally biased toward basic residues; the sequence is SKAKKNKKKLN. Residues Ser47, Ser51, and Ser55 each carry the phosphoserine modification. Phosphotyrosine is present on Tyr57. Positions 61–70 are enriched in acidic residues; sequence PEDDEVDEEV. Residues 73–85 are compositionally biased toward basic residues; it reads VKKKPSKKSKKAK. A compositionally biased stretch (acidic residues) spans 92-106; that stretch reads FADEQSVEEEEEEDS. Ser97 is modified (phosphoserine). Positions 111-121 are enriched in basic residues; sequence RKNKKSSKKAS. Acidic residues-rich tracts occupy residues 129-144 and 163-172; these read LADDMDDLSLDEEESE and SEALDDGDIE. Ser137 and Ser163 each carry phosphoserine. ABC transporter domains lie at 276–519 and 594–809; these read LQVE…VQLA and IKFQ…AKER. Residues 308-315 and 627-634 contribute to the ATP site; these read APNGSGKS and GPNGAGKT.

Belongs to the ABC transporter superfamily.

Its subcellular location is the cytoplasm. This is an uncharacterized protein from Schizosaccharomyces pombe (strain 972 / ATCC 24843) (Fission yeast).